We begin with the raw amino-acid sequence, 343 residues long: UDP-3-O-acylglucosamine N-acyltransferase (343 aa).

The Proton acceptor role is filled by histidine 239.

This sequence belongs to the transferase hexapeptide repeat family. LpxD subfamily. As to quaternary structure, homotrimer.

It carries out the reaction a UDP-3-O-[(3R)-3-hydroxyacyl]-alpha-D-glucosamine + a (3R)-hydroxyacyl-[ACP] = a UDP-2-N,3-O-bis[(3R)-3-hydroxyacyl]-alpha-D-glucosamine + holo-[ACP] + H(+). It functions in the pathway bacterial outer membrane biogenesis; LPS lipid A biosynthesis. Catalyzes the N-acylation of UDP-3-O-acylglucosamine using 3-hydroxyacyl-ACP as the acyl donor. Is involved in the biosynthesis of lipid A, a phosphorylated glycolipid that anchors the lipopolysaccharide to the outer membrane of the cell. The sequence is that of UDP-3-O-acylglucosamine N-acyltransferase from Vibrio parahaemolyticus serotype O3:K6 (strain RIMD 2210633).